The chain runs to 115 residues: Tyrosine-protein phosphatase 22 (115 aa).

Positions 1-115 (WLMIVEQKCR…ETGGDAPMVV (115 aa)) constitute a Tyrosine-protein phosphatase domain. Aspartate 83 contributes to the substrate binding site.

The protein belongs to the protein-tyrosine phosphatase family.

The enzyme catalyses O-phospho-L-tyrosyl-[protein] + H2O = L-tyrosyl-[protein] + phosphate. The protein is Tyrosine-protein phosphatase 22 (STY-22) of Styela plicata (Wrinkled sea squirt).